The primary structure comprises 384 residues: Protein V (384 aa).

Disordered stretches follow at residues 1 to 23 (MDQD…GGRE) and 38 to 318 (SEPT…KKGH). The span at 7–20 (ILKEDSEVEREAPG) shows a compositional bias: basic and acidic residues. A compositionally biased stretch (polar residues) spans 50-59 (LHNTINTPQG). A Phosphoserine; by host modification is found at Ser68. A compositionally biased stretch (basic and acidic residues) spans 83-101 (RSGEESRVSGRTSKPEAEA). Ser125 bears the Phosphoserine; by host mark. Residues 150-168 (GIEDENREMAAHPDKRGED) are compositionally biased toward basic and acidic residues. A compositionally biased stretch (polar residues) spans 191-206 (ASNNGRSMEPGSSHSA). Ser192, Ser249, Ser257, and Ser260 each carry phosphoserine; by host. Zn(2+) is bound by residues His318, Cys337, Cys341, Cys353, Cys355, Cys358, Cys362, and Cys365.

Belongs to the paramyxoviruses V protein family. Interacts with host IFIH1/MDA5 and DHX58/LGP2. Interacts with host IRF3. Interacts with host RIGI regulatory protein (via CARDs domain) and host TRIM25 (via SPRY domain); these interactions prevent TRIM25-mediated ubiquitination of RIG-I and disrupts downstream RIG-I signaling.

Its subcellular location is the host cytoplasm. Functionally, plays an essential role in the inhibition of host immune response. Prevents the establishment of cellular antiviral state by blocking interferon-alpha/beta (IFN-alpha/beta) production and signaling pathway. Interacts with host IFIH1/MDA5 and DHX58/LGP2 to inhibit the transduction pathway involved in the activation of IFN-beta promoter, thus protecting the virus against cell antiviral state. Also interacts with and inhibits host IRF3. Blocks the type I interferon signaling pathway by disrupting the RIG-I signaling pathway. This Sendai virus (strain Harris) (SeV) protein is Protein V (P/V/C).